The primary structure comprises 625 residues: Chaperone protein HtpG (625 aa).

The a; substrate-binding stretch occupies residues 1–341 (MGKRKFKAES…SEDLSLNISR (341 aa)). Positions 342–551 (EMLQHDRQLK…DGEISLEMEK (210 aa)) are b. Positions 552–625 (IINAMPDDQQ…FTNDICKVMV (74 aa)) are c.

The protein belongs to the heat shock protein 90 family. In terms of assembly, homodimer.

It is found in the cytoplasm. Molecular chaperone. Has ATPase activity. The sequence is that of Chaperone protein HtpG from Oceanobacillus iheyensis (strain DSM 14371 / CIP 107618 / JCM 11309 / KCTC 3954 / HTE831).